A 290-amino-acid polypeptide reads, in one-letter code: Lectin-related protein (290 aa).

An N-terminal signal peptide occupies residues 1–36 (ANSNSRPHLLQTQKPFSVVLAISITFYLLLLNKVNS). N-linked (GlcNAc...) asparagine glycans are attached at residues asparagine 119, asparagine 147, and asparagine 152. Residues glutamate 161 and aspartate 163 each coordinate Mn(2+). 3 residues coordinate Ca(2+): aspartate 163, asparagine 167, and aspartate 170. The Mn(2+) site is built by aspartate 170 and histidine 175.

Belongs to the leguminous lectin family. As to quaternary structure, homotetramer.

Functionally, does not have any carbohydrate binding or agglutination activity. This is Lectin-related protein from Cladrastis kentukea (Yellow wood).